Reading from the N-terminus, the 257-residue chain is UPF0246 protein A1S_2267 (257 aa).

The protein belongs to the UPF0246 family.

The polypeptide is UPF0246 protein A1S_2267 (Acinetobacter baumannii (strain ATCC 17978 / DSM 105126 / CIP 53.77 / LMG 1025 / NCDC KC755 / 5377)).